We begin with the raw amino-acid sequence, 453 residues long: Ribulose bisphosphate carboxylase large chain (453 aa).

A propeptide spanning residues 1–2 (MS) is cleaved from the precursor. Pro3 carries the post-translational modification N-acetylproline. N6,N6,N6-trimethyllysine is present on Lys14. Substrate-binding residues include Asn123 and Thr173. The active-site Proton acceptor is Lys175. Residue Lys177 coordinates substrate. 3 residues coordinate Mg(2+): Lys201, Asp203, and Glu204. Residue Lys201 is modified to N6-carboxylysine. Residue His294 is the Proton acceptor of the active site. Substrate-binding residues include Arg295, His327, and Ser379.

It belongs to the RuBisCO large chain family. Type I subfamily. Heterohexadecamer of 8 large chains and 8 small chains; disulfide-linked. The disulfide link is formed within the large subunit homodimers. Mg(2+) is required as a cofactor. In terms of processing, the disulfide bond which can form in the large chain dimeric partners within the hexadecamer appears to be associated with oxidative stress and protein turnover.

The protein localises to the plastid. It is found in the chloroplast. It catalyses the reaction 2 (2R)-3-phosphoglycerate + 2 H(+) = D-ribulose 1,5-bisphosphate + CO2 + H2O. The catalysed reaction is D-ribulose 1,5-bisphosphate + O2 = 2-phosphoglycolate + (2R)-3-phosphoglycerate + 2 H(+). Functionally, ruBisCO catalyzes two reactions: the carboxylation of D-ribulose 1,5-bisphosphate, the primary event in carbon dioxide fixation, as well as the oxidative fragmentation of the pentose substrate in the photorespiration process. Both reactions occur simultaneously and in competition at the same active site. This Sherardia arvensis (Blue field-madder) protein is Ribulose bisphosphate carboxylase large chain.